The sequence spans 355 residues: 4-dimethylallyltryptophan N-methyltransferase easF (355 aa).

Belongs to the methyltransferase superfamily. Homodimer.

The catalysed reaction is 4-(3-methylbut-2-enyl)-L-tryptophan + S-adenosyl-L-methionine = 4-(3-methylbut-2-enyl)-L-abrine + S-adenosyl-L-homocysteine + H(+). The protein operates within alkaloid biosynthesis; ergot alkaloid biosynthesis. 4-dimethylallyltryptophan N-methyltransferase; part of the gene cluster that mediates the biosynthesis of fungal ergot alkaloid. DmaW catalyzes the first step of ergot alkaloid biosynthesis by condensing dimethylallyl diphosphate (DMAP) and tryptophan to form 4-dimethylallyl-L-tryptophan. The second step is catalyzed by the methyltransferase easF that methylates 4-dimethylallyl-L-tryptophan in the presence of S-adenosyl-L-methionine, resulting in the formation of 4-dimethylallyl-L-abrine. The catalase easC and the FAD-dependent oxidoreductase easE then transform 4-dimethylallyl-L-abrine to chanoclavine-I which is further oxidized by easD in the presence of NAD(+), resulting in the formation of chanoclavine-I aldehyde. Agroclavine dehydrogenase easG then mediates the conversion of chanoclavine-I aldehyde to agroclavine via a non-enzymatic adduct reaction: the substrate is an iminium intermediate that is formed spontaneously from chanoclavine-I aldehyde in the presence of glutathione. Further conversion of agroclavine to paspalic acid is a two-step process involving oxidation of agroclavine to elymoclavine and of elymoclavine to paspalic acid, the second step being performed by the elymoclavine oxidase cloA. However, cloA does not encode a functional enzyme indicating that C.fusiformis terminates its ergot alkaloid pathway at elymoclavine. The chain is 4-dimethylallyltryptophan N-methyltransferase easF from Claviceps fusiformis (Ergot fungus).